The sequence spans 378 residues: Stimulator of interferon genes protein (378 aa).

The next 2 helical transmembrane spans lie at 21–41 (AAFV…EPAD) and 46–66 (WLVL…LCSL). 2 S-palmitoyl cysteine lipidation sites follow: Cys-88 and Cys-91. The next 2 membrane-spanning stretches (helical) occupy residues 89 to 109 (LGCP…YTFL) and 114 to 134 (GLPF…NILL). The segment at 153–339 (FNVAHGLAWS…KHLKQEEKEE (187 aa)) is cyclic dinucleotide-binding domain (CBD). 2',3'-cGAMP-binding residues include Ser-162, Tyr-167, Arg-238, and Thr-263. 3',3'-c-di-GMP-binding positions include Ser-162, Tyr-167, 238–241 (RVYT), and Thr-263. Tyr-167, Arg-238, and Thr-263 together coordinate 2',3'-cUAMP. The segment at 339–378 (EVTVGTMGSSGVLESSTLDKEPQLLISGMDQPLPLRTDVF) is C-terminal tail (CTT). Ser-354 bears the Phosphoserine mark. The residue at position 355 (Thr-355) is a Phosphothreonine. Residues 362–365 (LLIS) carry the pLxIS motif motif. Ser-365 bears the Phosphoserine; by TBK1 mark.

Belongs to the STING family. In terms of assembly, homodimer; forms a homodimer in absence of cyclic nucleotide (c-di-GMP or cGAMP). Homotetramer; in presence of cyclic nucleotide (c-di-GMP or cGAMP), forms tetramers and higher-order oligomers through side-by-side packing. Interacts (when phosphorylated) with IRF3; following activation and phosphorylation on the pLxIS motif by TBK1, recruits IRF3. Interacts with TBK1; when homodimer, leading to subsequent production of IFN-beta. Post-translationally, phosphorylation by TBK1 leads to activation and production of IFN-beta. Following cyclic nucleotide (c-di-GMP or cGAMP)-binding, activation and translocation from the endoplasmic reticulum, STING1 is phosphorylated by TBK1 at Ser-365 in the pLxIS motif. The phosphorylated pLxIS motif constitutes an IRF3-binding motif, leading to recruitment of the transcription factor IRF3 to induce type-I interferons and other cytokines. In contrast, lacks phosphorylation site at position 357, leading to reduced production of type-I interferons and other cytokines.

The protein localises to the endoplasmic reticulum membrane. The protein resides in the cytoplasm. It localises to the perinuclear region. It is found in the endoplasmic reticulum-Golgi intermediate compartment membrane. Its subcellular location is the golgi apparatus membrane. The protein localises to the cytoplasmic vesicle. The protein resides in the autophagosome membrane. It localises to the mitochondrion outer membrane. It is found in the cell membrane. The catalysed reaction is H(+)(in) = H(+)(out). In terms of biological role, facilitator of innate immune signaling that acts as a sensor of cytosolic DNA from bacteria and viruses and promotes low production of type I interferon (IFN-alpha and IFN-beta). Compared to other mammals, STING1-dependent type I interferon induction is strongly reduced in bats, suggesting that the cGAS-STING pathway promotes a limited inflammatory response. Innate immune response is triggered in response to non-CpG double-stranded DNA from viruses and bacteria delivered to the cytoplasm. Acts by binding cyclic dinucleotides: recognizes and binds cyclic di-GMP (c-di-GMP), a second messenger produced by bacteria, cyclic UMP-AMP (2',3'-cUAMP), and cyclic GMP-AMP (cGAMP), a messenger produced by CGAS in response to DNA virus in the cytosol. Upon binding to c-di-GMP, cUAMP or cGAMP, STING1 oligomerizes, translocates from the endoplasmic reticulum and is phosphorylated by TBK1 on the pLxIS motif, leading to recruitment and subsequent activation of the transcription factor IRF3 to induce expression of type I interferon and exert a potent anti-viral state. In addition to promote the production of type I interferons, plays a direct role in autophagy. Following cGAMP-binding, STING1 buds from the endoplasmic reticulum into COPII vesicles, which then form the endoplasmic reticulum-Golgi intermediate compartment (ERGIC). The ERGIC serves as the membrane source for WIPI2 recruitment and LC3 lipidation, leading to formation of autophagosomes that target cytosolic DNA or DNA viruses for degradation by the lysosome. Promotes autophagy by acting as a proton channel that directs proton efflux from the Golgi to facilitate MAP1LC3B/LC3B lipidation. The autophagy- and interferon-inducing activities can be uncoupled and autophagy induction is independent of TBK1 phosphorylation. The polypeptide is Stimulator of interferon genes protein (Rhinolophus ferrumequinum (Greater horseshoe bat)).